A 538-amino-acid polypeptide reads, in one-letter code: Methyl-accepting chemotaxis protein NahY (538 aa).

The Cytoplasmic segment spans residues 1–9; the sequence is MQQFTIRTR. Residues 10 to 30 traverse the membrane as a helical segment; it reads LLMLVGAMFIGFITIELMGFS. Topologically, residues 31 to 187 are periplasmic; it reads ALQRGVASLN…AVVLYDSSRT (157 aa). The helical transmembrane segment at 188 to 208 threads the bilayer; that stretch reads MLALLLLGILICGGVFATRLI. The region spanning 209 to 261 is the HAMP domain; the sequence is RSIIHPLTTLKDAAARVALGDLSQSIQVSGRNEVTDVQQSVQAMQANLRNTLQ. Residues 209–538 are Cytoplasmic-facing; that stretch reads RSIIHPLTTL…LNNLVNRFSM (330 aa). Residues 266 to 502 enclose the Methyl-accepting transducer domain; that stretch reads SAAQLAAAAE…EVDRNLVAIS (237 aa).

This sequence belongs to the methyl-accepting chemotaxis (MCP) protein family.

It localises to the cell inner membrane. Its function is as follows. Chemotactic-signal transducers respond to changes in the concentration of attractants and repellents in the environment, transduce a signal from the outside to the inside of the cell, and facilitate sensory adaptation through the variation of the level of methylation. Chemoreceptor for naphthalene or a related compound. May facilitate biodegradation. In Pseudomonas putida (Arthrobacter siderocapsulatus), this protein is Methyl-accepting chemotaxis protein NahY (nahY).